We begin with the raw amino-acid sequence, 116 residues long: NADH-ubiquinone oxidoreductase chain 3 (116 aa).

Helical transmembrane passes span Phe10 to Ala30, Phe64 to Leu84, and Val88 to Val108.

Belongs to the complex I subunit 3 family.

The protein localises to the mitochondrion membrane. It catalyses the reaction a ubiquinone + NADH + 5 H(+)(in) = a ubiquinol + NAD(+) + 4 H(+)(out). Functionally, core subunit of the mitochondrial membrane respiratory chain NADH dehydrogenase (Complex I) that is believed to belong to the minimal assembly required for catalysis. Complex I functions in the transfer of electrons from NADH to the respiratory chain. The immediate electron acceptor for the enzyme is believed to be ubiquinone. The chain is NADH-ubiquinone oxidoreductase chain 3 (ND3) from Patiria pectinifera (Starfish).